Consider the following 277-residue polypeptide: uncharacterized protein (277 aa).

32 to 39 (GPQGSGKS) is a binding site for ATP.

The protein belongs to the GLYK kinase family.

The protein localises to the cytoplasm. It is found in the nucleus. Has a role in meiosis. This is an uncharacterized protein from Schizosaccharomyces pombe (strain 972 / ATCC 24843) (Fission yeast).